The primary structure comprises 66 residues: Surface composition regulator (66 aa).

Belongs to the GlgS family.

Major determinant of cell surface composition. Negatively regulates motility, adhesion and synthesis of biofilm exopolysaccharides. The protein is Surface composition regulator of Shigella flexneri.